The chain runs to 414 residues: Putative gustatory receptor 47b (414 aa).

Residues 1–5 (MQRDD) lie on the Cytoplasmic side of the membrane. The chain crosses the membrane as a helical span at residues 6 to 26 (GFVYCYGNLYSLLLYWGLVTI). Residues 27–40 (RVRSPDRGGAFSNR) are Extracellular-facing. Residues 41–61 (WTVCYALFTRSFMVICFMATV) traverse the membrane as a helical segment. The Cytoplasmic portion of the chain corresponds to 62-142 (MTKLRDPEMS…QWNYRRARLK (81 aa)). A helical membrane pass occupies residues 143–163 (YWYGTVIVGFCFFSFSISLIF). Topologically, residues 164-182 (DTTRCTCGIPSTLLMAFTY) are extracellular. A helical transmembrane segment spans residues 183-203 (TLLTSSVGLLGFVHIGIMDFI). Residues 204 to 249 (RVRLRLVQQLLHQLYQADDSSEVHERIAYLFEMSKRCSFLLAELNG) lie on the Cytoplasmic side of the membrane. Residues 250-270 (VFGFAAAAGIFYDFTIMTCFV) traverse the membrane as a helical segment. The Extracellular segment spans residues 271 to 291 (YVICQKLLEREPWDPEYVYML). Residues 292–312 (LHVAIHTYKVVITSTYGYLLL) form a helical membrane-spanning segment. The Cytoplasmic segment spans residues 313-364 (REKRNCMHLLSQYSRYFSGQDVARRKTEDFQHWRMHNRQAAMVGSTTLLSVS). A helical transmembrane segment spans residues 365-385 (TIYLVYNGMANYVIILVQLLF). At 386–414 (QQQQIKDHQLTSGKDVDIVGPMGPITHMD) the chain is on the extracellular side.

This sequence belongs to the insect chemoreceptor superfamily. Gustatory receptor (GR) family. Gr57a subfamily. In terms of tissue distribution, expressed in neurons of the terminal external chemosensory organ of larvae.

It localises to the cell membrane. Functionally, probable gustatory receptor which mediates acceptance or avoidance behavior, depending on its substrates. The sequence is that of Putative gustatory receptor 47b (Gr47b) from Drosophila melanogaster (Fruit fly).